We begin with the raw amino-acid sequence, 269 residues long: Formamidopyrimidine-DNA glycosylase (269 aa).

Pro-2 functions as the Schiff-base intermediate with DNA in the catalytic mechanism. Residue Glu-3 is the Proton donor of the active site. The active-site Proton donor; for beta-elimination activity is the Lys-57. Residues His-90, Arg-109, and Lys-150 each coordinate DNA. The FPG-type zinc-finger motif lies at 235-269 (QVYGRKGEPCRVCGTPIVATKHAQRATFYCRHCQK). The active-site Proton donor; for delta-elimination activity is the Arg-259.

The protein belongs to the FPG family. In terms of assembly, monomer. It depends on Zn(2+) as a cofactor.

The catalysed reaction is Hydrolysis of DNA containing ring-opened 7-methylguanine residues, releasing 2,6-diamino-4-hydroxy-5-(N-methyl)formamidopyrimidine.. It catalyses the reaction 2'-deoxyribonucleotide-(2'-deoxyribose 5'-phosphate)-2'-deoxyribonucleotide-DNA = a 3'-end 2'-deoxyribonucleotide-(2,3-dehydro-2,3-deoxyribose 5'-phosphate)-DNA + a 5'-end 5'-phospho-2'-deoxyribonucleoside-DNA + H(+). Functionally, involved in base excision repair of DNA damaged by oxidation or by mutagenic agents. Acts as a DNA glycosylase that recognizes and removes damaged bases. Has a preference for oxidized purines, such as 7,8-dihydro-8-oxoguanine (8-oxoG). Has AP (apurinic/apyrimidinic) lyase activity and introduces nicks in the DNA strand. Cleaves the DNA backbone by beta-delta elimination to generate a single-strand break at the site of the removed base with both 3'- and 5'-phosphates. The chain is Formamidopyrimidine-DNA glycosylase from Salmonella agona (strain SL483).